We begin with the raw amino-acid sequence, 536 residues long: uncharacterized protein (536 aa).

The Cytoplasmic segment spans residues methionine 1–glutamate 8. A helical transmembrane segment spans residues isoleucine 9 to phenylalanine 29. Over tryptophan 30–arginine 502 the chain is Extracellular. Asparagine 73, asparagine 236, asparagine 363, and asparagine 376 each carry an N-linked (GlcNAc...) asparagine glycan. Residues isoleucine 503–leucine 523 traverse the membrane as a helical segment. At valine 524–valine 536 the chain is on the cytoplasmic side.

The protein belongs to the CD36 family.

The protein resides in the membrane. This is an uncharacterized protein from Caenorhabditis elegans.